A 576-amino-acid chain; its full sequence is Ferroportin (576 aa).

Residues 1–23 (MPKAGEQARQGGCCGSLANYLTS) are Cytoplasmic-facing. Residues 24–53 (AKFLLYLGHSLSTWGDRMWHFAVSVFLVEL) traverse the membrane as a helical segment. 2 residues coordinate Fe cation: D39 and H43. Residues 54–57 (YGNS) lie on the Extracellular side of the membrane. Residues 58–84 (LLLTAVYGLVVAGSVLVLGAIIGDWVD) traverse the membrane as a helical segment. Over 85–87 (KNA) the chain is Cytoplasmic. Residues 88 to 118 (RLKVAQTSLVVQNVSVILCGIILMMVFLHKN) form a helical membrane-spanning segment. Topologically, residues 119-126 (ELLTMYHG) are extracellular. A helical transmembrane segment spans residues 127 to 162 (WVLTFCYILIITIADVANLASTATAITIQRDWIVVV). At 163–164 (AG) the chain is on the cytoplasmic side. The chain crosses the membrane as a helical span at residues 165-195 (GDRSKLADMNATIRRIDQLTNILAPMAVGQI). Residues 196 to 202 (MTFGSAV) are Extracellular-facing. A helical transmembrane segment spans residues 203–229 (IGCGFISGWNLVSMCVEYFLLWKVYQK). Topologically, residues 230–306 (TPALAVKAAL…DGWVSYYNQS (77 aa)) are cytoplasmic. The helical transmembrane segment at 307–333 (VFLAGMGLAFLYMTVLGFDCITTGYAY) threads the bilayer. Residue C326 participates in Fe cation binding. At 334–338 (TQGLS) the chain is on the extracellular side. A helical transmembrane segment spans residues 339-366 (GSILSILMGASAITGIMGTVAFTWLRRK). The Cytoplasmic segment spans residues 367–368 (CG). A helical transmembrane segment spans residues 369–391 (LVRTGLISGFAQLSCLILCVISV). The Extracellular segment spans residues 392–458 (FMPGSPLDLS…ETTPKSVPII (67 aa)). Residue N439 is glycosylated (N-linked (GlcNAc...) asparagine). Residues 459–488 (SVSLLFAGVIAARIGLWSFDLTVTQLLQEN) traverse the membrane as a helical segment. The Cytoplasmic portion of the chain corresponds to 489–493 (VIESE). Residues 494-518 (RGIINGVQNSMNYLLDLLHFIMVIL) form a helical membrane-spanning segment. Residue H512 participates in Fe cation binding. Residues 519–521 (APN) are Extracellular-facing. Residues 522–547 (PEAFGLLVLISVSFVAMGHIMYFRFA) form a helical membrane-spanning segment. The Cytoplasmic portion of the chain corresponds to 548–576 (QKTLGSKLFACGADDEEVTNENQANTSVV).

It belongs to the ferroportin (FP) (TC 2.A.100) family. SLC40A subfamily. Identified in a complex with STOM. Interacts with HAMP; affinity of the peptide hormone HAMP for SLC40A1 increases by 80-fold in the presence of iron and the interaction promotes SLC40A1 ubiquitination and degradation. Part of a complex composed of SLC40A1/ferroportin, TF/transferrin and HEPH/hephaestin that transfers iron from cells to transferrin. Post-translationally, polyubiquitinated by RNF217; leading to proteasomal degradation. Under conditions of high systemic iron levels, both the hormone peptide hepcidin/HAMP and holo(iron bound)-transferrin/TF induce the ubiquitination, internalization and proteasomal degradation of SLC40A1 to control iron release from cells.

The protein localises to the cell membrane. It is found in the basolateral cell membrane. The enzyme catalyses Fe(2+)(in) = Fe(2+)(out). Its activity is regulated as follows. During elevated serum iron levels, liver-derived hepcidin/HAMP negatively regulates cell surface ferroportin/SLC40A1 by inducing its ubiquitination, internalization, and degradation. Indeed, hepcidin/HAMP affinity towards ferroportin/SLC40A1 increases by 80-fold in the presence of iron. In terms of biological role, transports Fe(2+) from the inside of a cell to the outside of the cell, playing a key role for maintaining systemic iron homeostasis. Transports iron from intestinal, splenic, hepatic cells, macrophages and erythrocytes into the blood to provide iron to other tissues. Controls therefore dietary iron uptake, iron recycling by macrophages and erythrocytes, and release of iron stores in hepatocytes. When iron is in excess in serum, circulating HAMP/hepcidin levels increase resulting in a degradation of SLC40A1, thus limiting the iron efflux to plasma. The protein is Ferroportin of Canis lupus familiaris (Dog).